Here is a 399-residue protein sequence, read N- to C-terminus: Elongation factor Tu (399 aa).

The tr-type G domain maps to 10 to 204 (KPHVNIGTIG…AVDASIPEPE (195 aa)). The tract at residues 19–26 (GHVDHGKT) is G1. 19–26 (GHVDHGKT) lines the GTP pocket. A Mg(2+)-binding site is contributed by T26. Residues 60–64 (GITIN) are G2. A G3 region spans residues 81–84 (DCPG). Residues 81–85 (DCPGH) and 136–139 (NKCD) each bind GTP. The G4 stretch occupies residues 136-139 (NKCD). The segment at 174 to 176 (SGL) is G5.

This sequence belongs to the TRAFAC class translation factor GTPase superfamily. Classic translation factor GTPase family. EF-Tu/EF-1A subfamily. In terms of assembly, monomer.

Its subcellular location is the cytoplasm. The catalysed reaction is GTP + H2O = GDP + phosphate + H(+). Its function is as follows. GTP hydrolase that promotes the GTP-dependent binding of aminoacyl-tRNA to the A-site of ribosomes during protein biosynthesis. This Prochlorococcus marinus subsp. pastoris (strain CCMP1986 / NIES-2087 / MED4) protein is Elongation factor Tu.